Reading from the N-terminus, the 158-residue chain is uncharacterized protein (158 aa).

In terms of domain architecture, HTH asnC-type spans 12-73; it reads LDEIDRAILR…LINPFKAGYE (62 aa). The H-T-H motif DNA-binding region spans 31–50; the sequence is YSEISRRINVPESTVRARVN.

This is an uncharacterized protein from Pyrococcus abyssi (strain GE5 / Orsay).